The chain runs to 428 residues: Serine--tRNA ligase (428 aa).

An L-serine-binding site is contributed by 235-237 (TAE). Residue 266 to 268 (RSE) coordinates ATP. Glu289 is a binding site for L-serine. 353–356 (EISS) contacts ATP. Ser389 provides a ligand contact to L-serine.

Belongs to the class-II aminoacyl-tRNA synthetase family. Type-1 seryl-tRNA synthetase subfamily. Homodimer. The tRNA molecule binds across the dimer.

Its subcellular location is the cytoplasm. The catalysed reaction is tRNA(Ser) + L-serine + ATP = L-seryl-tRNA(Ser) + AMP + diphosphate + H(+). It carries out the reaction tRNA(Sec) + L-serine + ATP = L-seryl-tRNA(Sec) + AMP + diphosphate + H(+). The protein operates within aminoacyl-tRNA biosynthesis; selenocysteinyl-tRNA(Sec) biosynthesis; L-seryl-tRNA(Sec) from L-serine and tRNA(Sec): step 1/1. Its function is as follows. Catalyzes the attachment of serine to tRNA(Ser). Is also able to aminoacylate tRNA(Sec) with serine, to form the misacylated tRNA L-seryl-tRNA(Sec), which will be further converted into selenocysteinyl-tRNA(Sec). This chain is Serine--tRNA ligase, found in Shewanella woodyi (strain ATCC 51908 / MS32).